The chain runs to 360 residues: G-protein coupled receptor 15 (360 aa).

At methionine 1–serine 33 the chain is on the extracellular side. The chain crosses the membrane as a helical span at residues valine 34–leucine 54. Over methionine 55 to aspartate 69 the chain is Cytoplasmic. The chain crosses the membrane as a helical span at residues isoleucine 70–valine 90. Over aspartate 91–serine 120 the chain is Extracellular. The chain crosses the membrane as a helical span at residues valine 121–serine 141. Residues arginine 142 to cysteine 149 lie on the Cytoplasmic side of the membrane. Residues alanine 150–leucine 170 form a helical membrane-spanning segment. At serine 171 to lysine 192 the chain is on the extracellular side. A helical membrane pass occupies residues leucine 193 to threonine 213. Over cysteine 214–serine 239 the chain is Cytoplasmic. A helical membrane pass occupies residues isoleucine 240–phenylalanine 260. At lysine 261–methionine 284 the chain is on the extracellular side. Residues glutamate 285–phenylalanine 305 traverse the membrane as a helical segment. Topologically, residues aspartate 306–leucine 360 are cytoplasmic. The residue at position 359 (serine 359) is a Phosphoserine.

This sequence belongs to the G-protein coupled receptor 1 family. Interacts with adapter YWHAE; this interaction promotes ER-to-Golgi transport of GPR15. Post-translationally, phosphorylation is necessary for YWHAE binding and efficient surface expression. In terms of processing, O-glycosylated. Sialylated O-glycans in the N-terminal tail inhibits binding of GPR15LG. Sulfation is required for efficient binding of GPR15LG.

It is found in the cell membrane. In terms of biological role, g protein-coupled receptor that plays an important role in immune homeostasis. Acts via its natural ligand GPR15LG, a chemokine-like polypeptide strongly expressed in gastrointestinal tissues. GPR15-GPR15LG signaling axis regulates intestinal homeostasis and inflammation through the migration of immune cells. Controls thereby the specific homing of T-cells, particularly FOXP3+ regulatory T-cells (Tregs), to the large intestine lamina propria. Also required for skin localization of thymus-derived dendritic epidermal T-cells. Plays an important role in mediating cytoprotective function as well as angiogenesis of thrombomodulin. Mechanistically, preferentially signals through the Gi/o pathway to inhibit adenylate cyclase activity and activate a phosphatidylinositol-calcium second messenger system that regulates the release of Ca(2+) ions from intracellular stores. This chain is G-protein coupled receptor 15 (GPR15), found in Macaca mulatta (Rhesus macaque).